The primary structure comprises 137 residues: Peptide methionine sulfoxide reductase MsrB (137 aa).

The 123-residue stretch at 7 to 129 (AEELKKNLSE…NSASLRFTDG (123 aa)) folds into the MsrB domain. The Zn(2+) site is built by Cys-46, Cys-49, Cys-95, and Cys-98. Cys-118 serves as the catalytic Nucleophile.

The protein belongs to the MsrB Met sulfoxide reductase family. The cofactor is Zn(2+).

It catalyses the reaction L-methionyl-[protein] + [thioredoxin]-disulfide + H2O = L-methionyl-(R)-S-oxide-[protein] + [thioredoxin]-dithiol. The sequence is that of Peptide methionine sulfoxide reductase MsrB from Escherichia coli (strain K12 / MC4100 / BW2952).